The chain runs to 493 residues: Ketol-acid reductoisomerase (NADP(+)) (493 aa).

One can recognise a KARI N-terminal Rossmann domain in the interval 17–208; that stretch reads LGKCRFMKRE…GGDRAGVLES (192 aa). NADP(+) is bound by residues 45-48, arginine 68, arginine 76, serine 78, and 108-110; these read CGAQ and DKQ. Residue histidine 132 is part of the active site. Glycine 158 provides a ligand contact to NADP(+). 2 consecutive KARI C-terminal knotted domains span residues 209–353 and 354–486; these read SFIA…SEQE and YYDK…MTDM. Mg(2+) is bound by residues aspartate 217, glutamate 221, glutamate 389, and glutamate 393. Residue serine 414 coordinates substrate.

Belongs to the ketol-acid reductoisomerase family. Mg(2+) is required as a cofactor.

The enzyme catalyses (2R)-2,3-dihydroxy-3-methylbutanoate + NADP(+) = (2S)-2-acetolactate + NADPH + H(+). It catalyses the reaction (2R,3R)-2,3-dihydroxy-3-methylpentanoate + NADP(+) = (S)-2-ethyl-2-hydroxy-3-oxobutanoate + NADPH + H(+). It participates in amino-acid biosynthesis; L-isoleucine biosynthesis; L-isoleucine from 2-oxobutanoate: step 2/4. The protein operates within amino-acid biosynthesis; L-valine biosynthesis; L-valine from pyruvate: step 2/4. Functionally, involved in the biosynthesis of branched-chain amino acids (BCAA). Catalyzes an alkyl-migration followed by a ketol-acid reduction of (S)-2-acetolactate (S2AL) to yield (R)-2,3-dihydroxy-isovalerate. In the isomerase reaction, S2AL is rearranged via a Mg-dependent methyl migration to produce 3-hydroxy-3-methyl-2-ketobutyrate (HMKB). In the reductase reaction, this 2-ketoacid undergoes a metal-dependent reduction by NADPH to yield (R)-2,3-dihydroxy-isovalerate. The polypeptide is Ketol-acid reductoisomerase (NADP(+)) (Colwellia psychrerythraea (strain 34H / ATCC BAA-681) (Vibrio psychroerythus)).